Reading from the N-terminus, the 555-residue chain is E3 ubiquitin-protein ligase ARIH1 (555 aa).

Residues 1–47 (MDSDEGYNYEFDEDEECSEEDSGAEEEEDDDEDEPDDDNLDLGEVEL) show a composition bias toward acidic residues. Residues 1 to 93 (MDSDEGYNYE…GGGGGPGHEQ (93 aa)) are disordered. Over residues 65–90 (ETGGGGGSALGPGGGGGGGGGGGGPG) the composition is skewed to gly residues. The UBA-like stretch occupies residues 103–151 (TAEQILQHMVECIREVNEVIQNPATITRILLSHFNWDKEKLMERYFDGN). Position 140 is an N6-acetyllysine (Lys-140). The interval 180–391 (QDMPCQICYL…SAWYNCNRYN (212 aa)) is TRIAD supradomain. Residues Cys-184, Cys-187, Cys-201, His-203, Cys-206, Cys-209, Cys-229, Cys-234, Cys-274, Cys-279, Cys-295, Cys-297, Cys-302, Cys-305, His-310, Cys-315, Cys-342, and Cys-345 each coordinate Zn(2+). The RING-type 1 zinc finger occupies 184–234 (CQICYLNYPNSYFTGLECGHKFCMQCWSEYLTTKIMEEGMGQTISCPAHGC). Residues 254–315 (LKYQHLITNS…GENWHDPVKC (62 aa)) form an IBR-type zinc finger. Residues 342-373 (CPKCHVTIEKDGGCNHMVCRNQNCKAEFCWVC) form an RING-type 2; atypical zinc finger. Cys-355 is an active-site residue. Cys-360, Cys-365, Cys-370, Cys-373, His-380, and Cys-387 together coordinate Zn(2+). Residues 406–555 (RAALQRYLFY…EKDLWEYIED (150 aa)) form an ariadne domain region.

This sequence belongs to the RBR family. Ariadne subfamily. Interacts (via the first RING-type zinc finger) with UBE2L3. Associates with cullin-RING ubiquitin ligase (CRL) complexes containing CUL1, CUL2 and CUL3. Interacts with neddylated CUL1. Interacts with neddylated CUL2. Interacts with neddylated CUL3. Interacts with neddylated CUL4A. In terms of tissue distribution, widely expressed.

The protein localises to the cytoplasm. It localises to the nucleus. It is found in the cajal body. The enzyme catalyses [E2 ubiquitin-conjugating enzyme]-S-ubiquitinyl-L-cysteine + [acceptor protein]-L-lysine = [E2 ubiquitin-conjugating enzyme]-L-cysteine + [acceptor protein]-N(6)-ubiquitinyl-L-lysine.. Its pathway is protein modification; protein ubiquitination. With respect to regulation, autoinhibited by the ariadne domain, which masks the second RING-type zinc finger that contains the active site and inhibits the E3 activity. Inhibition is relieved upon binding to neddylated cullin-RING ubiquitin ligase complexes, which activate the E3 ligase activity of ARIH1. Functionally, E3 ubiquitin-protein ligase, which catalyzes ubiquitination of target proteins together with ubiquitin-conjugating enzyme E2 UBE2L3. Acts as an atypical E3 ubiquitin-protein ligase by working together with cullin-RING ubiquitin ligase (CRL) complexes and initiating ubiquitination of CRL substrates: associates with CRL complexes and specifically mediates addition of the first ubiquitin on CRLs targets. The initial ubiquitin is then elongated by CDC34/UBE2R1 and UBE2R2. E3 ubiquitin-protein ligase activity is activated upon binding to neddylated cullin-RING ubiquitin ligase complexes. Plays a role in protein translation in response to DNA damage by mediating ubiquitination of EIF4E2, the consequences of EIF4E2 ubiquitination are however unclear. According to a report, EIF4E2 ubiquitination leads to promote EIF4E2 cap-binding and protein translation arrest. According to another report EIF4E2 ubiquitination leads to its subsequent degradation. Acts as the ligase involved in ISGylation of EIF4E2. In vitro, controls the degradation of the LINC (LInker of Nucleoskeleton and Cytoskeleton) complex member SUN2 and may therefore have a role in the formation and localization of the LINC complex, and as a consequence, may act in nuclear subcellular localization and nuclear morphology. In Mus musculus (Mouse), this protein is E3 ubiquitin-protein ligase ARIH1 (Arih1).